A 392-amino-acid chain; its full sequence is tRNA (guanine-N(7)-)-methyltransferase (392 aa).

S-adenosyl-L-methionine-binding residues include Glu123, Glu148, and Asp175. Substrate contacts are provided by Lys201 and Asp231.

This sequence belongs to the class I-like SAM-binding methyltransferase superfamily. TrmB family.

It carries out the reaction guanosine(46) in tRNA + S-adenosyl-L-methionine = N(7)-methylguanosine(46) in tRNA + S-adenosyl-L-homocysteine. It functions in the pathway tRNA modification; N(7)-methylguanine-tRNA biosynthesis. In terms of biological role, catalyzes the formation of N(7)-methylguanine at position 46 (m7G46) in tRNA. In Campylobacter jejuni (strain RM1221), this protein is tRNA (guanine-N(7)-)-methyltransferase.